Here is a 62-residue protein sequence, read N- to C-terminus: Photosystem II reaction center protein Z (62 aa).

Transmembrane regions (helical) follow at residues 8–28 (ALFA…VILA) and 41–61 (FSGA…NSFI).

This sequence belongs to the PsbZ family. As to quaternary structure, PSII is composed of 1 copy each of membrane proteins PsbA, PsbB, PsbC, PsbD, PsbE, PsbF, PsbH, PsbI, PsbJ, PsbK, PsbL, PsbM, PsbT, PsbY, PsbZ, Psb30/Ycf12, at least 3 peripheral proteins of the oxygen-evolving complex and a large number of cofactors. It forms dimeric complexes.

The protein resides in the plastid. It is found in the chloroplast thylakoid membrane. May control the interaction of photosystem II (PSII) cores with the light-harvesting antenna, regulates electron flow through the 2 photosystem reaction centers. PSII is a light-driven water plastoquinone oxidoreductase, using light energy to abstract electrons from H(2)O, generating a proton gradient subsequently used for ATP formation. The sequence is that of Photosystem II reaction center protein Z from Chara vulgaris (Common stonewort).